We begin with the raw amino-acid sequence, 522 residues long: Ribonuclease Y (522 aa).

A helical transmembrane segment spans residues 7–27 (STILYCLFFFFLGIAAVLAFI). The region spanning 212 to 272 (TTSTVGVPTD…VRREVARMSL (61 aa)) is the KH domain. In terms of domain architecture, HD spans 338-431 (VLRHSVEVAF…VATADACSAS (94 aa)).

This sequence belongs to the RNase Y family.

It is found in the cell membrane. In terms of biological role, endoribonuclease that initiates mRNA decay. In Rhodopirellula baltica (strain DSM 10527 / NCIMB 13988 / SH1), this protein is Ribonuclease Y.